Here is a 212-residue protein sequence, read N- to C-terminus: Adenylate kinase (212 aa).

10–15 (GAGKGT) contributes to the ATP binding site. The segment at 30 to 59 (STGDMFRAAMANQTEMGRLAKSYIDKGELV) is NMP. AMP contacts are provided by residues Thr-31, Arg-36, 57-59 (ELV), 86-89 (GYPR), and Gln-93. An LID region spans residues 127-159 (GRIINRKTGETFHKVFNPPVDYKEEDYYQREDD). Residues Arg-128 and 137 to 138 (TF) contribute to the ATP site. 2 residues coordinate AMP: Arg-156 and Arg-167. Gln-195 contacts ATP.

This sequence belongs to the adenylate kinase family. Monomer.

It is found in the cytoplasm. The catalysed reaction is AMP + ATP = 2 ADP. It participates in purine metabolism; AMP biosynthesis via salvage pathway; AMP from ADP: step 1/1. In terms of biological role, catalyzes the reversible transfer of the terminal phosphate group between ATP and AMP. Plays an important role in cellular energy homeostasis and in adenine nucleotide metabolism. The polypeptide is Adenylate kinase (Streptococcus pyogenes serotype M1).